The following is a 187-amino-acid chain: Homeobox expressed in ES cells 1-B (187 aa).

A DNA-binding region (homeobox) is located at residues 110–169 (GRRPRTAFTRSQIEILENVFRVNSYPGIDVREELASKLALDEDRIQIWFQNRRAKLKRSH).

The protein belongs to the ANF homeobox family. As to quaternary structure, the N-terminus interacts with the LIM 2 domain of zyx. In terms of tissue distribution, first expressed at a low level in the late blastula stage (stage 9) in most cells of the animal half of the embryo. Following this, predominantly expressed in two zones; the dorsal blastopore lip (Spemann organizer) at the beginning of gastrulation, and subsequently in the anterior part of the neural anlage (the region of future forebrain).

Its subcellular location is the nucleus. Functionally, regulates the earliest stages of development of the anterior neural plate. Plays a role in forebrain development by inhibiting the expression of otx2 and pax6 in the rostral region of the anterior neural plate. Necessary for both neural differentiation and neural patterning. Controls Spemann organizer development. May act as a transcriptional repressor. The polypeptide is Homeobox expressed in ES cells 1-B (hesx1-b) (Xenopus laevis (African clawed frog)).